The sequence spans 148 residues: Large ribosomal subunit protein bL9 (148 aa).

This sequence belongs to the bacterial ribosomal protein bL9 family.

Its function is as follows. Binds to the 23S rRNA. The sequence is that of Large ribosomal subunit protein bL9 from Pseudomonas savastanoi pv. phaseolicola (strain 1448A / Race 6) (Pseudomonas syringae pv. phaseolicola (strain 1448A / Race 6)).